The following is an 843-amino-acid chain: Leucine--tRNA ligase (843 aa).

The short motif at 61-71 is the 'HIGH' region element; sequence PYPSGDLHMGH. The 'KMSKS' region motif lies at 606–610; the sequence is AMSKS. Lysine 609 contacts ATP.

The protein belongs to the class-I aminoacyl-tRNA synthetase family.

It localises to the cytoplasm. It carries out the reaction tRNA(Leu) + L-leucine + ATP = L-leucyl-tRNA(Leu) + AMP + diphosphate. The protein is Leucine--tRNA ligase of Arthrobacter sp. (strain FB24).